The following is a 530-amino-acid chain: Bifunctional purine biosynthesis protein PurH (530 aa).

The region spanning 1–148 (MENSRPIKRA…KNHKDVGIVV (148 aa)) is the MGS-like domain.

This sequence belongs to the PurH family.

The catalysed reaction is (6R)-10-formyltetrahydrofolate + 5-amino-1-(5-phospho-beta-D-ribosyl)imidazole-4-carboxamide = 5-formamido-1-(5-phospho-D-ribosyl)imidazole-4-carboxamide + (6S)-5,6,7,8-tetrahydrofolate. It catalyses the reaction IMP + H2O = 5-formamido-1-(5-phospho-D-ribosyl)imidazole-4-carboxamide. It participates in purine metabolism; IMP biosynthesis via de novo pathway; 5-formamido-1-(5-phospho-D-ribosyl)imidazole-4-carboxamide from 5-amino-1-(5-phospho-D-ribosyl)imidazole-4-carboxamide (10-formyl THF route): step 1/1. Its pathway is purine metabolism; IMP biosynthesis via de novo pathway; IMP from 5-formamido-1-(5-phospho-D-ribosyl)imidazole-4-carboxamide: step 1/1. This chain is Bifunctional purine biosynthesis protein PurH, found in Psychromonas ingrahamii (strain DSM 17664 / CCUG 51855 / 37).